A 157-amino-acid chain; its full sequence is Endoribonuclease YbeY (157 aa).

Zn(2+) contacts are provided by His114, His118, and His124.

The protein belongs to the endoribonuclease YbeY family. It depends on Zn(2+) as a cofactor.

The protein localises to the cytoplasm. Its function is as follows. Single strand-specific metallo-endoribonuclease involved in late-stage 70S ribosome quality control and in maturation of the 3' terminus of the 16S rRNA. In Salmonella agona (strain SL483), this protein is Endoribonuclease YbeY.